The following is a 389-amino-acid chain: Formate-dependent phosphoribosylglycinamide formyltransferase (389 aa).

Residues 12 to 13 (EL) and glutamate 72 contribute to the N(1)-(5-phospho-beta-D-ribosyl)glycinamide site. Residues arginine 104, lysine 145, 150 to 155 (SSGKGQ), 185 to 188 (EAFV), and glutamate 193 contribute to the ATP site. An ATP-grasp domain is found at 109–300 (DLASKELGLR…EFELHARAVL (192 aa)). Positions 258 and 270 each coordinate Mg(2+). Residues aspartate 277, lysine 348, and 355–356 (RR) contribute to the N(1)-(5-phospho-beta-D-ribosyl)glycinamide site.

Belongs to the PurK/PurT family. In terms of assembly, homodimer.

The enzyme catalyses N(1)-(5-phospho-beta-D-ribosyl)glycinamide + formate + ATP = N(2)-formyl-N(1)-(5-phospho-beta-D-ribosyl)glycinamide + ADP + phosphate + H(+). Its pathway is purine metabolism; IMP biosynthesis via de novo pathway; N(2)-formyl-N(1)-(5-phospho-D-ribosyl)glycinamide from N(1)-(5-phospho-D-ribosyl)glycinamide (formate route): step 1/1. Functionally, involved in the de novo purine biosynthesis. Catalyzes the transfer of formate to 5-phospho-ribosyl-glycinamide (GAR), producing 5-phospho-ribosyl-N-formylglycinamide (FGAR). Formate is provided by PurU via hydrolysis of 10-formyl-tetrahydrofolate. This is Formate-dependent phosphoribosylglycinamide formyltransferase from Chlorobium phaeobacteroides (strain DSM 266 / SMG 266 / 2430).